Reading from the N-terminus, the 430-residue chain is Tol-Pal system protein TolB (430 aa).

Residues 1-21 (MKQAFRVALGFLILWASVLHA) form the signal peptide.

Belongs to the TolB family. In terms of assembly, the Tol-Pal system is composed of five core proteins: the inner membrane proteins TolA, TolQ and TolR, the periplasmic protein TolB and the outer membrane protein Pal. They form a network linking the inner and outer membranes and the peptidoglycan layer.

The protein resides in the periplasm. Its function is as follows. Part of the Tol-Pal system, which plays a role in outer membrane invagination during cell division and is important for maintaining outer membrane integrity. TolB occupies a key intermediary position in the Tol-Pal system because it communicates directly with both membrane-embedded components, Pal in the outer membrane and TolA in the inner membrane. The polypeptide is Tol-Pal system protein TolB (Serratia proteamaculans (strain 568)).